The chain runs to 374 residues: tRNA 2-selenouridine synthase (374 aa).

Residues 12 to 136 (FLRDVPMLDT…MRGFLLQTID (125 aa)) enclose the Rhodanese domain. The S-selanylcysteine intermediate role is filled by Cys95.

The protein belongs to the SelU family. Monomer.

It carries out the reaction 5-methylaminomethyl-2-thiouridine(34) in tRNA + selenophosphate + (2E)-geranyl diphosphate + H2O + H(+) = 5-methylaminomethyl-2-selenouridine(34) in tRNA + (2E)-thiogeraniol + phosphate + diphosphate. The catalysed reaction is 5-methylaminomethyl-2-thiouridine(34) in tRNA + (2E)-geranyl diphosphate = 5-methylaminomethyl-S-(2E)-geranyl-thiouridine(34) in tRNA + diphosphate. It catalyses the reaction 5-methylaminomethyl-S-(2E)-geranyl-thiouridine(34) in tRNA + selenophosphate + H(+) = 5-methylaminomethyl-2-(Se-phospho)selenouridine(34) in tRNA + (2E)-thiogeraniol. The enzyme catalyses 5-methylaminomethyl-2-(Se-phospho)selenouridine(34) in tRNA + H2O = 5-methylaminomethyl-2-selenouridine(34) in tRNA + phosphate. Functionally, involved in the post-transcriptional modification of the uridine at the wobble position (U34) of tRNA(Lys), tRNA(Glu) and tRNA(Gln). Catalyzes the conversion of 2-thiouridine (S2U-RNA) to 2-selenouridine (Se2U-RNA). Acts in a two-step process involving geranylation of 2-thiouridine (S2U) to S-geranyl-2-thiouridine (geS2U) and subsequent selenation of the latter derivative to 2-selenouridine (Se2U) in the tRNA chain. The chain is tRNA 2-selenouridine synthase from Bordetella petrii (strain ATCC BAA-461 / DSM 12804 / CCUG 43448).